We begin with the raw amino-acid sequence, 513 residues long: ATP synthase subunit alpha (513 aa).

169–176 (GDRQTGKS) contacts ATP.

Belongs to the ATPase alpha/beta chains family. As to quaternary structure, F-type ATPases have 2 components, CF(1) - the catalytic core - and CF(0) - the membrane proton channel. CF(1) has five subunits: alpha(3), beta(3), gamma(1), delta(1), epsilon(1). CF(0) has three main subunits: a(1), b(2) and c(9-12). The alpha and beta chains form an alternating ring which encloses part of the gamma chain. CF(1) is attached to CF(0) by a central stalk formed by the gamma and epsilon chains, while a peripheral stalk is formed by the delta and b chains.

The protein localises to the cell membrane. The catalysed reaction is ATP + H2O + 4 H(+)(in) = ADP + phosphate + 5 H(+)(out). In terms of biological role, produces ATP from ADP in the presence of a proton gradient across the membrane. The alpha chain is a regulatory subunit. The protein is ATP synthase subunit alpha of Baumannia cicadellinicola subsp. Homalodisca coagulata.